The primary structure comprises 90 residues: Small ribosomal subunit protein bS20 (90 aa).

It belongs to the bacterial ribosomal protein bS20 family.

Its function is as follows. Binds directly to 16S ribosomal RNA. This is Small ribosomal subunit protein bS20 from Francisella tularensis subsp. tularensis (strain FSC 198).